We begin with the raw amino-acid sequence, 630 residues long: tRNA uridine 5-carboxymethylaminomethyl modification enzyme MnmG (630 aa).

FAD is bound at residue 13-18; sequence GGGHAG. Position 273–287 (273–287) interacts with NAD(+); that stretch reads GPRYCPSIEDKIHRF.

This sequence belongs to the MnmG family. As to quaternary structure, homodimer. Heterotetramer of two MnmE and two MnmG subunits. FAD serves as cofactor.

The protein resides in the cytoplasm. Its function is as follows. NAD-binding protein involved in the addition of a carboxymethylaminomethyl (cmnm) group at the wobble position (U34) of certain tRNAs, forming tRNA-cmnm(5)s(2)U34. This chain is tRNA uridine 5-carboxymethylaminomethyl modification enzyme MnmG, found in Pseudomonas aeruginosa (strain LESB58).